Here is a 1061-residue protein sequence, read N- to C-terminus: Transcription factor GTE10 (1061 aa).

2 disordered regions span residues 32-56 and 106-152; these read ERMN…NNGV and NDHS…RLNV. Positions 109–118 are enriched in basic and acidic residues; sequence SCSDGPRRPP. One can recognise a Bromo domain in the interval 156–262; the sequence is YTVASVMKEC…KYFESGWKSI (107 aa). Residues 304–386 enclose the NET domain; it reads KLRVEPAKLV…DYLREKKKSM (83 aa). Disordered stretches follow at residues 443 to 518, 538 to 558, 606 to 645, and 710 to 1033; these read ACRN…LNEL, VPDE…PDKR, KERL…ARQA, and HLGL…GNGK. Positions 448-476 are enriched in low complexity; that stretch reads ESSSSSSSSSESGSSSSDSDSCSSSGSET. The span at 477 to 506 shows a compositional bias: basic and acidic residues; it reads DSIKASKPTSREEKKQPGVGIDKKEDDSNS. Residues 588 to 658 adopt a coiled-coil conformation; the sequence is PEKLRIEREE…MEKTVEINEG (71 aa). Basic and acidic residues-rich tracts occupy residues 733–755, 770–792, 828–852, 860–883, and 912–929; these read RKVE…RVEG, EAHD…ERQL, EEVH…EDPR, VSEK…REEQ, and LSLD…REEG. The stretch at 852 to 893 forms a coiled coil; sequence RASGNEESVSEKAQDYENQRDEKINQSEREEQLENVLEQESS. Over residues 940 to 949 the composition is skewed to polar residues; sequence LVSQKTQDNG. Composition is skewed to basic and acidic residues over residues 952 to 962 and 990 to 1002; these read EDEKSINKIEG and GEQK…KGVE.

In terms of assembly, interacts with TIP/NAC091. As to expression, widely expressed in all tissues.

Its subcellular location is the nucleus. In terms of biological role, acts as a negative regulator in plant response to changes in environmental conditions through the control of ABA-regulated gene expression. The sequence is that of Transcription factor GTE10 (GTE10) from Arabidopsis thaliana (Mouse-ear cress).